Here is a 629-residue protein sequence, read N- to C-terminus: Chaperone protein HtpG (629 aa).

The a; substrate-binding stretch occupies residues methionine 1–arginine 337. The tract at residues glutamate 338–glutamine 554 is b. Positions leucine 555–glycine 629 are c.

It belongs to the heat shock protein 90 family. Homodimer.

The protein resides in the cytoplasm. In terms of biological role, molecular chaperone. Has ATPase activity. The protein is Chaperone protein HtpG of Acidithiobacillus ferrooxidans (strain ATCC 23270 / DSM 14882 / CIP 104768 / NCIMB 8455) (Ferrobacillus ferrooxidans (strain ATCC 23270)).